The sequence spans 503 residues: Maturase K (503 aa).

Belongs to the intron maturase 2 family. MatK subfamily.

The protein resides in the plastid. The protein localises to the chloroplast. Its function is as follows. Usually encoded in the trnK tRNA gene intron. Probably assists in splicing its own and other chloroplast group II introns. In Panax ginseng (Korean ginseng), this protein is Maturase K.